A 282-amino-acid polypeptide reads, in one-letter code: Bis(5'-nucleosyl)-tetraphosphatase, symmetrical (282 aa).

This sequence belongs to the Ap4A hydrolase family.

The catalysed reaction is P(1),P(4)-bis(5'-adenosyl) tetraphosphate + H2O = 2 ADP + 2 H(+). Its function is as follows. Hydrolyzes diadenosine 5',5'''-P1,P4-tetraphosphate to yield ADP. This is Bis(5'-nucleosyl)-tetraphosphatase, symmetrical from Burkholderia mallei (strain NCTC 10247).